A 476-amino-acid polypeptide reads, in one-letter code: WD repeat, SAM and U-box domain-containing protein 1 (476 aa).

WD repeat units lie at residues 10 to 47 (DHSD…ELPY), 52 to 91 (GHTY…MLAV), 95 to 134 (PTGS…FYRS), 137 to 176 (VKDG…LCNE), 178 to 227 (AHDL…FLGG), 237 to 276 (GHSA…ILHT), and 279 to 318 (QHTR…PCAG). The region spanning 333–396 (WSEDDVSAWL…LQKIEELRMK (64 aa)) is the SAM domain. Positions 403–476 (AVPDEFLCPI…ISRWLETQQK (74 aa)) constitute a U-box domain.

The protein is WD repeat, SAM and U-box domain-containing protein 1 (WDSUB1) of Gallus gallus (Chicken).